The primary structure comprises 244 residues: 7-cyano-7-deazaguanine synthase (244 aa).

17–27 (FSGGQDSTTCL) is an ATP binding site. Zn(2+) contacts are provided by Cys-205, Cys-220, Cys-223, and Cys-226.

The protein belongs to the QueC family. Zn(2+) serves as cofactor.

The catalysed reaction is 7-carboxy-7-deazaguanine + NH4(+) + ATP = 7-cyano-7-deazaguanine + ADP + phosphate + H2O + H(+). It participates in purine metabolism; 7-cyano-7-deazaguanine biosynthesis. Catalyzes the ATP-dependent conversion of 7-carboxy-7-deazaguanine (CDG) to 7-cyano-7-deazaguanine (preQ(0)). This is 7-cyano-7-deazaguanine synthase from Bordetella parapertussis (strain 12822 / ATCC BAA-587 / NCTC 13253).